A 393-amino-acid polypeptide reads, in one-letter code: 5-amino-6-(D-ribitylamino)uracil--L-tyrosine 4-hydroxyphenyl transferase (393 aa).

Residues 71 to 318 (VTYVINRNIN…TAVSRIFLGN (248 aa)) form the Radical SAM core domain. [4Fe-4S] cluster contacts are provided by C85, C89, and C92.

This sequence belongs to the radical SAM superfamily. CofH family. In terms of assembly, consists of two subunits, CofG and CofH. The cofactor is [4Fe-4S] cluster.

The catalysed reaction is 5-amino-6-(D-ribitylamino)uracil + L-tyrosine + S-adenosyl-L-methionine = 5-amino-5-(4-hydroxybenzyl)-6-(D-ribitylimino)-5,6-dihydrouracil + 2-iminoacetate + 5'-deoxyadenosine + L-methionine + H(+). It functions in the pathway cofactor biosynthesis; coenzyme F0 biosynthesis. Its function is as follows. Catalyzes the radical-mediated synthesis of 5-amino-5-(4-hydroxybenzyl)-6-(D-ribitylimino)-5,6-dihydrouracil from 5-amino-6-(D-ribitylamino)uracil and L-tyrosine. The sequence is that of 5-amino-6-(D-ribitylamino)uracil--L-tyrosine 4-hydroxyphenyl transferase from Trichodesmium erythraeum (strain IMS101).